The sequence spans 314 residues: MSDTKSEIEGFIAIPTTSGEQQQQQPQQQQNEQQVVGTKDIKAPDQVGKKQRPRLIQEKSTQETNPLILEHATLEWVPQHMDKLLNQYQECRKMPAAEWLHLLTYLVALECGFVEEETFAQKRHLIQPVPSFSSFHAQNVRILSEQPARYEVCFNDTVYIMRLRTLLDKHAPEETSLVAALQCRLMAVSLGDQLMITLSPAPPSKEPGYSVSLSIGRYVLNIQAKNKPIYHRFRKLDELSYQLKQHLFQPMRSQQLMQMEMKLQPSLLGLPDELYFEIFRYLDKSQLNVVARVNRHLHFYSKEVERKRLKGGRS.

Residues M1–Q62 are disordered. The span at Q21–Q34 shows a compositional bias: low complexity. Residues M257–S314 are required for interaction with skpA and Cul1, but not with PI31. An F-box domain is found at Q264–L309.

Component of an SCF (SKP1-CUL1-F-box protein) E3 ubiquitin-protein ligase complex, at least composed of ntc, skpA and Cul1. Interacts (via F-box domain) with skpA and Cul1. Interacts with Prosalpha7 and PI31. Interacts with Bruce. As to expression, expressed in testis (at protein level).

Its subcellular location is the cytoplasm. In terms of biological role, functions together with PI31 to control non-apoptotic caspase activation during sperm individualization. Positively regulates PI31 stability. The chain is Protein nutcracker from Drosophila melanogaster (Fruit fly).